Here is a 334-residue protein sequence, read N- to C-terminus: Glyceraldehyde-3-phosphate dehydrogenase (334 aa).

NAD(+) is bound by residues 12 to 13 (RI), Asp37, Arg81, and Ser123. D-glyceraldehyde 3-phosphate is bound by residues 153 to 155 (SCT) and Thr184. Catalysis depends on Cys154, which acts as the Nucleophile. Position 185 (Asn185) interacts with NAD(+). D-glyceraldehyde 3-phosphate-binding positions include Arg199, 212-213 (TG), and Arg235. An NAD(+)-binding site is contributed by Asn314.

It belongs to the glyceraldehyde-3-phosphate dehydrogenase family. As to quaternary structure, homotetramer.

It localises to the cytoplasm. The enzyme catalyses D-glyceraldehyde 3-phosphate + phosphate + NAD(+) = (2R)-3-phospho-glyceroyl phosphate + NADH + H(+). Its pathway is carbohydrate degradation; glycolysis; pyruvate from D-glyceraldehyde 3-phosphate: step 1/5. Functionally, catalyzes the oxidative phosphorylation of glyceraldehyde 3-phosphate (G3P) to 1,3-bisphosphoglycerate (BPG) using the cofactor NAD. The first reaction step involves the formation of a hemiacetal intermediate between G3P and a cysteine residue, and this hemiacetal intermediate is then oxidized to a thioester, with concomitant reduction of NAD to NADH. The reduced NADH is then exchanged with the second NAD, and the thioester is attacked by a nucleophilic inorganic phosphate to produce BPG. The protein is Glyceraldehyde-3-phosphate dehydrogenase (gap) of Pseudomonas aeruginosa (strain ATCC 15692 / DSM 22644 / CIP 104116 / JCM 14847 / LMG 12228 / 1C / PRS 101 / PAO1).